The chain runs to 165 residues: Histone H1 (165 aa).

The interval 1 to 165 (GKQSTSKSVT…KKATKGSKKN (165 aa)) is disordered. Residues 9–18 (VTREKKDVKK) are compositionally biased toward basic and acidic residues. Basic residues predominate over residues 20–31 (VAPKKAIKKVTK). A compositionally biased stretch (low complexity) spans 32–41 (KSTTPVKTSK). A phosphothreonine mark is found at T48 and T54. Residues 68-89 (TMKESVSDAKKTVHKSAGDKKL) are compositionally biased toward basic and acidic residues. S83 carries the phosphoserine modification. A compositionally biased stretch (basic residues) spans 103–117 (KIVHPAKKAAAKPKT). The residue at position 117 (T117) is a Phosphothreonine. Over residues 118-157 (AKKEVKKDTKPVKKDAKKDTKPVKKDAKKDTKPAKKDTKK) the composition is skewed to basic and acidic residues.

Cell-growth/division-associated phosphorylation by a CDC2-like kinase. Is additionally phosphorylated on either Ser-33, Thr-34 or Thr-35, and on either Thr-39 or Ser-40.

The protein localises to the nucleus. The protein resides in the chromosome. Its function is as follows. Histones H1 are necessary for the condensation of nucleosome chains into higher-order structures. The polypeptide is Histone H1 (HHO) (Tetrahymena pyriformis).